The chain runs to 150 residues: 6,7-dimethyl-8-ribityllumazine synthase (150 aa).

Residues Phe-11, 43 to 45 (VYD), and 67 to 69 (AVI) contribute to the 5-amino-6-(D-ribitylamino)uracil site. (2S)-2-hydroxy-3-oxobutyl phosphate is bound at residue 72–73 (AT). The active-site Proton donor is His-75. Leu-100 provides a ligand contact to 5-amino-6-(D-ribitylamino)uracil. Arg-115 lines the (2S)-2-hydroxy-3-oxobutyl phosphate pocket.

It belongs to the DMRL synthase family.

The enzyme catalyses (2S)-2-hydroxy-3-oxobutyl phosphate + 5-amino-6-(D-ribitylamino)uracil = 6,7-dimethyl-8-(1-D-ribityl)lumazine + phosphate + 2 H2O + H(+). Its pathway is cofactor biosynthesis; riboflavin biosynthesis; riboflavin from 2-hydroxy-3-oxobutyl phosphate and 5-amino-6-(D-ribitylamino)uracil: step 1/2. Functionally, catalyzes the formation of 6,7-dimethyl-8-ribityllumazine by condensation of 5-amino-6-(D-ribitylamino)uracil with 3,4-dihydroxy-2-butanone 4-phosphate. This is the penultimate step in the biosynthesis of riboflavin. This Pyrobaculum arsenaticum (strain DSM 13514 / JCM 11321 / PZ6) protein is 6,7-dimethyl-8-ribityllumazine synthase.